Consider the following 218-residue polypeptide: Dual specificity protein phosphatase TpbA (218 aa).

Residues 1–28 form the signal peptide; sequence MHRSPLAWLRLLLAAVLGAFLLGGPLHA. Residues 44 to 188 enclose the Tyrosine-protein phosphatase domain; sequence DPSINLYRMS…YVRGADVDGL (145 aa). D105 functions as the Proton donor/acceptor in the catalytic mechanism. The Phosphocysteine intermediate role is filled by C132.

This sequence belongs to the protein-tyrosine phosphatase family.

The protein localises to the periplasm. It carries out the reaction O-phospho-L-tyrosyl-[protein] + H2O = L-tyrosyl-[protein] + phosphate. The catalysed reaction is O-phospho-L-threonyl-[protein] + H2O = L-threonyl-[protein] + phosphate. The enzyme catalyses O-phospho-L-seryl-[protein] + H2O = L-seryl-[protein] + phosphate. Its function is as follows. Phosphatase that regulates diverse phenotypes in P.aeruginosa via regulation of the concentration of cellular c-di-GMP. Acts by dephosphorylating the membrane-anchored diguanylate cyclase TpbB at tyrosine and serine/threonine sites, leading to inactivation of TpbB and reduced c-di-GMP production. In vitro shows phosphatase activity toward p-nitrophenyl phosphate (pNPP) and tyrosine phosphopeptides. Can efficiently dephosphorylate two phosphorylated peptides derived from the periplasmic domain of TpbB, with a strong preference for Tyr-48 over Tyr-62. The sequence is that of Dual specificity protein phosphatase TpbA from Pseudomonas aeruginosa (strain ATCC 15692 / DSM 22644 / CIP 104116 / JCM 14847 / LMG 12228 / 1C / PRS 101 / PAO1).